The primary structure comprises 557 residues: MEEDGGGGAGWGWATWRVAAVAAAAAVWVTMHVAARMADALWWRPRRLEAHFAAQGVRGPPYRFLLGSVREMVALMAEASSKPMSPPTSHNALPRVLAFYHYWRKIYGHRFLIWFGPTPRLTVAEPELIREIFLTRADAFDRYEAHPVVRQLEGDGLVSLHGDKWALHRRVLTDAFYPDNLNRLIPHVGKSVAALAAKWGAMAEAGGSGEVEVDVAEWFQAVTEEAITRATFGRSYDDGRVVFAMQGQLMAFASEAFRKVLVPGYRFLPTKKNRLSWRLDREIRRSLMRLIGRRSDEAEQGEKADDGSFRDLLGLMINAGAAAATRGNAGGEKNSPAAAIPVEDMLEECKTFFFAGKQTTTNLLTWATVLLAMHPDWQERARREVFDVCGAGELPSKEHLPKLKTLGMIMNETLRLYPPAVATIRRAKVDVQLSDGCMIPRDMELLVPIMAIHHDTRYWGPDASQFNPARFANGASKAAKHPLAFIPFGLGSRMCVGQNLARLEAKLTMAILLQRFEIRTSPNYVHAPTVLMLLYPQYGAPLIFRPLSSHPPDSTGP.

A helical transmembrane segment spans residues 13 to 35 (WATWRVAAVAAAAAVWVTMHVAA). Cysteine 495 contributes to the heme binding site.

This sequence belongs to the cytochrome P450 family. Heme serves as cofactor. As to expression, expressed in roots, shoot apex, leaf sheaths and leaf blades.

It localises to the membrane. In terms of biological role, cytochrome P450 involved in brassinosteroids (BRs) inactivation and regulation of BRs homeostasis. Is a multifunctional and multisubstrate enzyme that controls the endogenous bioactive BR content both by direct inactivation of castasterone (CS) and by decreasing the levels of BR precursors. Catalyzes the oxidation of carbon 22 hydroxylated BR intermediates to produce C26 oxidized metabolites. The chain is Cytochrome P450 734A2 (CYP734A2) from Oryza sativa subsp. japonica (Rice).